The sequence spans 89 residues: Co-chaperonin GroES (89 aa).

It belongs to the GroES chaperonin family. In terms of assembly, heptamer of 7 subunits arranged in a ring. Interacts with the chaperonin GroEL.

The protein localises to the cytoplasm. Its function is as follows. Together with the chaperonin GroEL, plays an essential role in assisting protein folding. The GroEL-GroES system forms a nano-cage that allows encapsulation of the non-native substrate proteins and provides a physical environment optimized to promote and accelerate protein folding. GroES binds to the apical surface of the GroEL ring, thereby capping the opening of the GroEL channel. This Fervidobacterium nodosum (strain ATCC 35602 / DSM 5306 / Rt17-B1) protein is Co-chaperonin GroES.